The primary structure comprises 229 residues: Potassium/proton antiporter CemA (229 aa).

3 helical membrane-spanning segments follow: residues phenylalanine 7–phenylalanine 27, methionine 106–tryptophan 126, and isoleucine 189–isoleucine 209.

This sequence belongs to the CemA family.

It localises to the plastid membrane. The catalysed reaction is K(+)(in) + H(+)(out) = K(+)(out) + H(+)(in). May be involved in proton extrusion. This is Potassium/proton antiporter CemA from Cuscuta reflexa (Southern Asian dodder).